The sequence spans 312 residues: MPLLGVTRKERDPATKLTANIGNALREQNDRLSRAEEIERRLAEGQAVIELDASSIEPSFVQDRMRGDIDGLLTSIREQGQQVPILVRPHPSQPGRYQVAFGHRRLRAVSELGLPVRAVVRELTDEQVVVAQGQENNEREDLTFIEKARFAHRLNRQFSREIVIAAMSIDKSNLSKMLLLVDALPSELTDAIGAAPGVGRPSWQQLAELIEKVSSPADVAKYAMSEEVQALPSAERFKAVIASLKPSRVARGLPEVMATPDGTRIAQVTQSKAKLEITIDRKATPDFATFVLDHVPALYQAYHAENQRKRGE.

It belongs to the ParB family.

Functionally, this protein is coded by a hairy root Ri plasmid, it is probably involved in its replication. The chain is Putative replication protein B (repB) from Rhizobium rhizogenes (Agrobacterium rhizogenes).